A 360-amino-acid polypeptide reads, in one-letter code: Methylthioribose-1-phosphate isomerase (360 aa).

Catalysis depends on Asp-252, which acts as the Proton donor.

Belongs to the eIF-2B alpha/beta/delta subunits family. MtnA subfamily.

The protein resides in the cytoplasm. Its subcellular location is the nucleus. The enzyme catalyses 5-(methylsulfanyl)-alpha-D-ribose 1-phosphate = 5-(methylsulfanyl)-D-ribulose 1-phosphate. Its pathway is amino-acid biosynthesis; L-methionine biosynthesis via salvage pathway; L-methionine from S-methyl-5-thio-alpha-D-ribose 1-phosphate: step 1/6. Catalyzes the interconversion of methylthioribose-1-phosphate (MTR-1-P) into methylthioribulose-1-phosphate (MTRu-1-P). The protein is Methylthioribose-1-phosphate isomerase of Trichoplax adhaerens (Trichoplax reptans).